Here is a 294-residue protein sequence, read N- to C-terminus: MKTKIIVIVGPTAVGKTALSIEVAKRFNGQIISGDSQQVYRGLDIGTAKIRPEEQEGIPHHLLDVREVGESYSAYDFVTEAAQAIREIAAQDQLPIICGGTGLYIQSLLEGYHLGGSVPHEEILAYRAQLDSWSDEDLFRKIAELGIEIPQLNRRRAMRALEIAHLGGSLENSQPDYEALLICLDDERERLYERINHRVDLMLEAGLLEEARWLYEQAPISQASKGIGYKELFPYFEGRMSLEEAVDTLKQNTRRFAKRQLTWFRNRMSVTFYQVGNPDYKNQVMEDIKNFLDK.

An ATP-binding site is contributed by 10 to 17; sequence GPTAVGKT. 12–17 contributes to the substrate binding site; sequence TAVGKT. Residues 35 to 38 are interaction with substrate tRNA; it reads DSQQ.

Belongs to the IPP transferase family. In terms of assembly, monomer. Mg(2+) serves as cofactor.

It catalyses the reaction adenosine(37) in tRNA + dimethylallyl diphosphate = N(6)-dimethylallyladenosine(37) in tRNA + diphosphate. Catalyzes the transfer of a dimethylallyl group onto the adenine at position 37 in tRNAs that read codons beginning with uridine, leading to the formation of N6-(dimethylallyl)adenosine (i(6)A). The sequence is that of tRNA dimethylallyltransferase from Streptococcus sanguinis (strain SK36).